The chain runs to 261 residues: Cytochrome c oxidase subunit 3 (261 aa).

Residues 1-15 are Mitochondrial matrix-facing; that stretch reads MAHQAHAYHMVDPSP. Residues 16 to 34 form a helical membrane-spanning segment; it reads WPLTGAIAALLMTSGLAIW. At 35–40 the chain is on the mitochondrial intermembrane side; sequence FHFHST. The helical transmembrane segment at 41–66 threads the bilayer; it reads TLMTLGLILLLLTMYQWWRDIIREGT. Topologically, residues 67–72 are mitochondrial matrix; sequence FQGHHT. A helical transmembrane segment spans residues 73 to 105; it reads PPVQKGLRYGMILFITSEVFFFLGFFWAFYHSS. Over 106-128 the chain is Mitochondrial intermembrane; it reads LAPTPELGGCWPPTGITPLDPFE. Residues 129–152 form a helical membrane-spanning segment; sequence VPLLNTAVLLASGVTVTWAHHSIM. Residues 153–155 lie on the Mitochondrial matrix side of the membrane; that stretch reads EGE. The chain crosses the membrane as a helical span at residues 156-183; it reads RKQAIQSLALTILLGLYFTALQAMEYYE. Residues 184–190 lie on the Mitochondrial intermembrane side of the membrane; the sequence is APFTIAD. The chain crosses the membrane as a helical span at residues 191–223; it reads GVYGSTFFVATGFHGLHVIIGSTFLAVCLLRQI. Residues 224-232 are Mitochondrial matrix-facing; the sequence is QYHFTSEHH. Residues 233 to 256 form a helical membrane-spanning segment; that stretch reads FGFEAAAWYWHFVDVVWLFLYVSI. At 257–261 the chain is on the mitochondrial intermembrane side; the sequence is YWWGS.

It belongs to the cytochrome c oxidase subunit 3 family. Component of the cytochrome c oxidase (complex IV, CIV), a multisubunit enzyme composed of 14 subunits. The complex is composed of a catalytic core of 3 subunits MT-CO1, MT-CO2 and MT-CO3, encoded in the mitochondrial DNA, and 11 supernumerary subunits COX4I, COX5A, COX5B, COX6A, COX6B, COX6C, COX7A, COX7B, COX7C, COX8 and NDUFA4, which are encoded in the nuclear genome. The complex exists as a monomer or a dimer and forms supercomplexes (SCs) in the inner mitochondrial membrane with NADH-ubiquinone oxidoreductase (complex I, CI) and ubiquinol-cytochrome c oxidoreductase (cytochrome b-c1 complex, complex III, CIII), resulting in different assemblies (supercomplex SCI(1)III(2)IV(1) and megacomplex MCI(2)III(2)IV(2)).

It is found in the mitochondrion inner membrane. The catalysed reaction is 4 Fe(II)-[cytochrome c] + O2 + 8 H(+)(in) = 4 Fe(III)-[cytochrome c] + 2 H2O + 4 H(+)(out). Component of the cytochrome c oxidase, the last enzyme in the mitochondrial electron transport chain which drives oxidative phosphorylation. The respiratory chain contains 3 multisubunit complexes succinate dehydrogenase (complex II, CII), ubiquinol-cytochrome c oxidoreductase (cytochrome b-c1 complex, complex III, CIII) and cytochrome c oxidase (complex IV, CIV), that cooperate to transfer electrons derived from NADH and succinate to molecular oxygen, creating an electrochemical gradient over the inner membrane that drives transmembrane transport and the ATP synthase. Cytochrome c oxidase is the component of the respiratory chain that catalyzes the reduction of oxygen to water. Electrons originating from reduced cytochrome c in the intermembrane space (IMS) are transferred via the dinuclear copper A center (CU(A)) of subunit 2 and heme A of subunit 1 to the active site in subunit 1, a binuclear center (BNC) formed by heme A3 and copper B (CU(B)). The BNC reduces molecular oxygen to 2 water molecules using 4 electrons from cytochrome c in the IMS and 4 protons from the mitochondrial matrix. This is Cytochrome c oxidase subunit 3 (mt-co3) from Cyprinus carpio (Common carp).